The sequence spans 398 residues: Succinate--CoA ligase [ADP-forming] subunit beta (398 aa).

The region spanning Lys9–Glu254 is the ATP-grasp domain. ATP is bound by residues Lys46, Gly53–Gly55, Glu109, Ala112, and Glu117. Positions 209 and 223 each coordinate Mg(2+). Substrate contacts are provided by residues Asn274 and Gly331–Met333.

This sequence belongs to the succinate/malate CoA ligase beta subunit family. In terms of assembly, heterotetramer of two alpha and two beta subunits. Mg(2+) is required as a cofactor.

It carries out the reaction succinate + ATP + CoA = succinyl-CoA + ADP + phosphate. The enzyme catalyses GTP + succinate + CoA = succinyl-CoA + GDP + phosphate. The protein operates within carbohydrate metabolism; tricarboxylic acid cycle; succinate from succinyl-CoA (ligase route): step 1/1. In terms of biological role, succinyl-CoA synthetase functions in the citric acid cycle (TCA), coupling the hydrolysis of succinyl-CoA to the synthesis of either ATP or GTP and thus represents the only step of substrate-level phosphorylation in the TCA. The beta subunit provides nucleotide specificity of the enzyme and binds the substrate succinate, while the binding sites for coenzyme A and phosphate are found in the alpha subunit. The chain is Succinate--CoA ligase [ADP-forming] subunit beta from Rhizobium meliloti (strain 1021) (Ensifer meliloti).